We begin with the raw amino-acid sequence, 168 residues long: Pleiotrophin (168 aa).

Residues methionine 1 to alanine 32 form the signal peptide. 5 disulfide bridges follow: cysteine 47–cysteine 76, cysteine 55–cysteine 85, cysteine 62–cysteine 89, cysteine 99–cysteine 131, and cysteine 109–cysteine 141. Chondroitin sulfate binding stretches follow at residues lysine 92–cysteine 99 and lysine 123–cysteine 131. The disordered stretch occupies residues cysteine 141–aspartate 168. Residues serine 147–aspartate 168 are chondroitin sulfate A binding.

In terms of assembly, interacts with ALK and NEK6. Interacts with PTPRZ1 (via chondroitin sulfate groups); promotes formation of homooligomers; oligomerization impairs tyrosine phosphatase activity. Forms a complex with PTPRZ1 and CTNNB1; this complex inactivates PTPRZ1 protein tyrosine phosphatase activity through PTN interaction and stimulates tyrosine phosphorylation of CTNNB1. Interacts with ITGB3 and ITGA5. Forms a complex with PTPRZ1 and integrin alpha-V/beta-3 (ITGAV:ITGB3) that stimulates endothelial cell migration through ITGB3 'Tyr-773' phosphorylation. Interacts with SDC3 (via heparan sulfate chains); this interaction mediates the neurite outgrowth-promoting signal from PTN to the cytoskeleton of growing neurites; this interaction mediates osteoblast recruitment. Interacts with GPC2 (via heparan sulfate); this interaction promotes neurite outgrowth through binding of PTN with chondroitin sulfate of proteoglycans, thereby releasing PTPRS of chondroitin sulfate proteoglycans (CSPGs) and leading to binding with heparan sulfate of GPC2. In terms of processing, phosphorylated by NEK6.

It localises to the secreted. Its function is as follows. Secreted growth factor that mediates its signal through cell-surface proteoglycan and non-proteoglycan receptors. Binds cell-surface proteoglycan receptor via their chondroitin sulfate (CS) groups. Thereby regulates many processes like cell proliferation, cell survival, cell growth, cell differentiation and cell migration in several tissues namely neuron and bone. Also plays a role in synaptic plasticity and learning-related behavior by inhibiting long-term synaptic potentiation. Binds PTPRZ1, leading to neutralization of the negative charges of the CS chains of PTPRZ1, inducing PTPRZ1 clustering, thereby causing the dimerization and inactivation of its phosphatase activity leading to increased tyrosine phosphorylation of each of the PTPRZ1 substrates like ALK, CTNNB1 or AFAP1L2 in order to activate the PI3K-AKT pathway. Through PTPRZ1 binding controls oligodendrocyte precursor cell differentiation by enhancing the phosphorylation of AFAP1L2 in order to activate the PI3K-AKT pathway. Forms a complex with PTPRZ1 and integrin alpha-V/beta-3 (ITGAV:ITGB3) that stimulates endothelial cell migration through SRC dephosphorylation and activation that consequently leads to ITGB3 'Tyr-773' phosphorylation. In adult hippocampus promotes dendritic arborization, spine development, and functional integration and connectivity of newborn granule neurons through ALK by activating AKT signaling pathway. Binds GPC2 and chondroitin sulfate proteoglycans (CSPGs) at the neuron surface, leading to abrogation of binding between PTPRS and CSPGs and neurite outgrowth promotion. Binds SDC3 and mediates bone formation by recruiting and attaching osteoblasts/osteoblast precursors to the sites for new bone deposition. Binds ALK and promotes cell survival and cell proliferation through MAPK pathway activation. Inhibits proliferation and enhances differentiation of neural stem cells by inhibiting FGF2-induced fibroblast growth factor receptor signaling pathway. Mediates regulatory mechanisms in normal hemostasis and in hematopoietic regeneration and in maintaining the balance of myeloid and lymphoid regeneration. In addition may play a role in the female reproductive system, auditory response and the progesterone-induced decidualization pathway. This is Pleiotrophin from Bos taurus (Bovine).